Consider the following 460-residue polypeptide: MRVKEIQRNYQHLWKWSLIILGMIMICKAIEKSWVTVYYGVPVWKDAETTLFCASDAKAYEKESHNVWATHACVPSDPSPQELVLGNVTENFNMWKNKMVEQMHEDIISLWDQSLKPCVKLTFLCVTLNCIDVKNSTNNNTEEATITNCSFKVPTELKDKTETVHTLFYKLDVVPLNVTNNSSISSTYRLINCNTSTITQACPKVSFEPIPIHYCAPAGFAILKCNDKKFNGTGPCKNVSTVQCTHGIRPVVSTQLLLNGSLSEEEVIIRSENITNNAKTIIVQLNETVKINCTRPGSDKKIRQSIRIGPGKVFYAKGGITGQAHCNITDGEWRNTLQQVAIALRRQFNNKSIIFNSSSGGDIEITTHTFNCGGEFFYCNTSELFTGIWNGTWDKNCTSTESNCTGNITLPCRIKQVVRTWQGVGQAMYAPPIEGTIRCSSNITGLLLTRDGGNGKCNSK.

The first 31 residues, 1–31 (MRVKEIQRNYQHLWKWSLIILGMIMICKAIE), serve as a signal peptide directing secretion. Cys53 and Cys73 form a disulfide bridge. Asn87, Asn135, Asn139, Asn148, Asn177, Asn180, Asn181, Asn194, Asn231, Asn238, Asn259, Asn273, Asn286, and Asn292 each carry an N-linked (GlcNAc...) asparagine; by host glycan. Disulfide bonds link Cys118–Cys202, Cys125–Cys193, Cys130–Cys149, Cys215–Cys244, and Cys225–Cys236. Positions 130 to 148 (CIDVKNSTNNNTEEATITN) are V1. Positions 149 to 193 (CSFKVPTELKDKTETVHTLFYKLDVVPLNVTNNSSISSTYRLINC) are V2. Residues 293 to 325 (CTRPGSDKKIRQSIRIGPGKVFYAKGGITGQAH) form a V3 region. Cys293 and Cys326 are disulfide-bonded. 3 N-linked (GlcNAc...) asparagine; by host glycosylation sites follow: Asn327, Asn350, and Asn356. The tract at residues 358–368 (SSGGDIEITTH) is CD4-binding loop. 3 cysteine pairs are disulfide-bonded: Cys372–Cys439, Cys379–Cys412, and Cys397–Cys404. The interval 379–412 (CNTSELFTGIWNGTWDKNCTSTESNCTGNITLPC) is V4. 6 N-linked (GlcNAc...) asparagine; by host glycosylation sites follow: Asn380, Asn390, Asn396, Asn403, Asn407, and Asn442.

It is found in the virion membrane. This chain is Truncated surface protein (env), found in Human immunodeficiency virus type 1 group M subtype U (isolate Z3) (HIV-1).